We begin with the raw amino-acid sequence, 133 residues long: Small ribosomal subunit protein uS8 (133 aa).

The protein belongs to the universal ribosomal protein uS8 family. In terms of assembly, part of the 30S ribosomal subunit. Contacts proteins S5 and S12.

Functionally, one of the primary rRNA binding proteins, it binds directly to 16S rRNA central domain where it helps coordinate assembly of the platform of the 30S subunit. The sequence is that of Small ribosomal subunit protein uS8 from Prochlorococcus marinus (strain MIT 9303).